A 1290-amino-acid polypeptide reads, in one-letter code: Nonribosomal peptide synthetase 6 (1290 aa).

Positions 1 to 27 (MTAIDVPWLSTPRRDNSHGTRSNSSCQ) are disordered. The interval 260-657 (SYQELDCQAS…AQVEHHLRSC (398 aa)) is adenylation. Residues 775 to 851 (APETELERKL…GLAQTHRHPV (77 aa)) form the Carrier domain. Position 812 is an O-(pantetheine 4'-phosphoryl)serine (serine 812). The segment at 846–870 (THRHPVRRAEVPRSSHDPDPFGRVR) is disordered. Residues 852 to 870 (RRAEVPRSSHDPDPFGRVR) are compositionally biased toward basic and acidic residues. The condensation stretch occupies residues 914-1162 (GGQLDPEQLR…PCMNIIPVRV (249 aa)).

This sequence belongs to the NRP synthetase family.

Functionally, nonribosomal peptide synthesis (NRPS) is a key mechanism responsible for the biosynthesis of bioactive metabolites which are potentially contributing to organismal virulence. The protein is Nonribosomal peptide synthetase 6 (NRPS6) of Aspergillus fumigatus (strain ATCC MYA-4609 / CBS 101355 / FGSC A1100 / Af293) (Neosartorya fumigata).